We begin with the raw amino-acid sequence, 200 residues long: Crossover junction endodeoxyribonuclease RuvC (200 aa).

Residues aspartate 18, glutamate 78, and aspartate 151 contribute to the active site. Mg(2+)-binding residues include aspartate 18, glutamate 78, and aspartate 151.

It belongs to the RuvC family. As to quaternary structure, homodimer which binds Holliday junction (HJ) DNA. The HJ becomes 2-fold symmetrical on binding to RuvC with unstacked arms; it has a different conformation from HJ DNA in complex with RuvA. In the full resolvosome a probable DNA-RuvA(4)-RuvB(12)-RuvC(2) complex forms which resolves the HJ. Mg(2+) is required as a cofactor.

It localises to the cytoplasm. It carries out the reaction Endonucleolytic cleavage at a junction such as a reciprocal single-stranded crossover between two homologous DNA duplexes (Holliday junction).. In terms of biological role, the RuvA-RuvB-RuvC complex processes Holliday junction (HJ) DNA during genetic recombination and DNA repair. Endonuclease that resolves HJ intermediates. Cleaves cruciform DNA by making single-stranded nicks across the HJ at symmetrical positions within the homologous arms, yielding a 5'-phosphate and a 3'-hydroxyl group; requires a central core of homology in the junction. The consensus cleavage sequence is 5'-(A/T)TT(C/G)-3'. Cleavage occurs on the 3'-side of the TT dinucleotide at the point of strand exchange. HJ branch migration catalyzed by RuvA-RuvB allows RuvC to scan DNA until it finds its consensus sequence, where it cleaves and resolves the cruciform DNA. The sequence is that of Crossover junction endodeoxyribonuclease RuvC from Cytophaga hutchinsonii (strain ATCC 33406 / DSM 1761 / CIP 103989 / NBRC 15051 / NCIMB 9469 / D465).